Reading from the N-terminus, the 371-residue chain is Peptidyl-prolyl cis-trans isomerase D (371 aa).

The PPIase cyclophilin-type domain maps to 8 to 172 (FFDIAIGGQL…EPVVIADCGQ (165 aa)). The tract at residues 175–202 (SDDPFLAERTSTDGDPYEDYPDDEDQEL) is disordered. Residues 189–201 (DPYEDYPDDEDQE) show a composition bias toward acidic residues. 3 TPR repeats span residues 212 to 245 (AKTI…LDVH), 265 to 303 (APLL…LELS), and 308 to 341 (AKAY…LPED).

Belongs to the cyclophilin-type PPIase family. PPIase D subfamily.

It is found in the cytoplasm. It catalyses the reaction [protein]-peptidylproline (omega=180) = [protein]-peptidylproline (omega=0). PPIases accelerate the folding of proteins. It catalyzes the cis-trans isomerization of proline imidic peptide bonds in oligopeptides. In Amanita muscaria (Fly agaric), this protein is Peptidyl-prolyl cis-trans isomerase D (Cyp40).